Here is a 168-residue protein sequence, read N- to C-terminus: ATP synthase F(1) complex subunit delta, mitochondrial (168 aa).

The N-terminal 22 residues, 1 to 22, are a transit peptide targeting the mitochondrion; it reads MLPSALLRRPGLGRLVRQVRLY. Lysine 136 and lysine 165 each carry N6-acetyllysine; alternate. An N6-succinyllysine; alternate mark is found at lysine 136 and lysine 165.

Belongs to the ATPase epsilon chain family. In terms of assembly, component of the ATP synthase complex composed at least of ATP5F1A/subunit alpha, ATP5F1B/subunit beta, ATP5MC1/subunit c (homooctomer), MT-ATP6/subunit a, MT-ATP8/subunit 8, ATP5ME/subunit e, ATP5MF/subunit f, ATP5MG/subunit g, ATP5MK/subunit k, ATP5MJ/subunit j, ATP5F1C/subunit gamma, ATP5F1D/subunit delta, ATP5F1E/subunit epsilon, ATP5PF/subunit F6, ATP5PB/subunit b, ATP5PD/subunit d, ATP5PO/subunit OSCP. ATP synthase complex consists of a soluble F(1) head domain (subunits alpha(3) and beta(3)) - the catalytic core - and a membrane F(0) domain - the membrane proton channel (subunits c, a, 8, e, f, g, k and j). These two domains are linked by a central stalk (subunits gamma, delta, and epsilon) rotating inside the F1 region and a stationary peripheral stalk (subunits F6, b, d, and OSCP). Component of a complex composed at least by ATPIF1, ATP5F1A, ATP5F1B, ATP5F1C AND ATP5F1E.

The protein resides in the mitochondrion. Its subcellular location is the mitochondrion inner membrane. Its function is as follows. Subunit delta, of the mitochondrial membrane ATP synthase complex (F(1)F(0) ATP synthase or Complex V) that produces ATP from ADP in the presence of a proton gradient across the membrane which is generated by electron transport complexes of the respiratory chain. ATP synthase complex consist of a soluble F(1) head domain - the catalytic core - and a membrane F(1) domain - the membrane proton channel. These two domains are linked by a central stalk rotating inside the F(1) region and a stationary peripheral stalk. During catalysis, ATP synthesis in the catalytic domain of F(1) is coupled via a rotary mechanism of the central stalk subunits to proton translocation. In vivo, can only synthesize ATP although its ATP hydrolase activity can be activated artificially in vitro. With the central stalk subunit gamma, is essential for the biogenesis of F(1) catalytic part of the ATP synthase complex namely in the formation of F1 assembly intermediate. This is ATP synthase F(1) complex subunit delta, mitochondrial from Bos taurus (Bovine).